A 121-amino-acid polypeptide reads, in one-letter code: MADFNSPIQYLKEDSRDRTSIGSLEYDENSDTIIPSFAAGLEDFEPIPSPTTTSTSLYSQLTHNMEKIAEEEDINFLHDTREFTSLVPEETDNKPEDDEESGAKPKKKKHLFPKLSSHKSK.

2 disordered regions span residues 1 to 24 (MADF…IGSL) and 84 to 121 (TSLV…HKSK). An N-acetylalanine; by host modification is found at Ala-2. Residues 104-121 (KPKKKKHLFPKLSSHKSK) are compositionally biased toward basic residues.

This sequence belongs to the asfivirus structural protein p14.5 family. In terms of assembly, interacts with the major capsid protein. Interacts with host IRF3; this interaction interferes with the recruitment of IRF3 to TBK1. Post-translationally, acetylated.

Its subcellular location is the virion. Its function is as follows. Structural protein required for transport of intracellular particles from the assembly sites to the plasma membrane. Binds to both ssDNA and dsDNA. Suppressed the activation of the cGAS/STING pathway by interfering with the recruitment of IRF3 to TBK1, which in turn suppresses IRF3 phosphorylation, decreasing interferon production. This Ornithodoros (relapsing fever ticks) protein is Structural protein p14.5.